The chain runs to 618 residues: Leucine aminopeptidase 2 (618 aa).

Residues 139-141 and 271-276 each bind a peptide; these read QCQ and PYGGME. H300 is a Zn(2+) binding site. The Proton acceptor role is filled by E301. The Zn(2+) site is built by H304 and E323. The Proton donor role is filled by Y389.

Belongs to the peptidase M1 family. The cofactor is Zn(2+).

Its subcellular location is the cytoplasm. It is found in the nucleus. It catalyses the reaction an epoxide + H2O = an ethanediol. In terms of biological role, aminopeptidase that preferentially cleaves di- and tripeptides. Also has low epoxide hydrolase activity (in vitro). Can hydrolyze the epoxide leukotriene LTA(4) but it forms preferentially 5,6-dihydroxy-7,9,11,14-eicosatetraenoic acid rather than the cytokine leukotriene B(4) as the product compared to the homologous mammalian enzyme (in vitro). This chain is Leucine aminopeptidase 2, found in Aspergillus clavatus (strain ATCC 1007 / CBS 513.65 / DSM 816 / NCTC 3887 / NRRL 1 / QM 1276 / 107).